Reading from the N-terminus, the 365-residue chain is tRNA(Met) cytidine acetate ligase (365 aa).

ATP contacts are provided by residues 7–20 (IAEFNPFHNGHKYL), glycine 96, asparagine 152, and arginine 175.

This sequence belongs to the TmcAL family.

The protein resides in the cytoplasm. It carries out the reaction cytidine(34) in elongator tRNA(Met) + acetate + ATP = N(4)-acetylcytidine(34) in elongator tRNA(Met) + AMP + diphosphate. Catalyzes the formation of N(4)-acetylcytidine (ac(4)C) at the wobble position of elongator tRNA(Met), using acetate and ATP as substrates. First activates an acetate ion to form acetyladenylate (Ac-AMP) and then transfers the acetyl group to tRNA to form ac(4)C34. This Streptococcus pneumoniae serotype 4 (strain ATCC BAA-334 / TIGR4) protein is tRNA(Met) cytidine acetate ligase.